Here is a 326-residue protein sequence, read N- to C-terminus: Interleukin-1-binding protein (326 aa).

The signal sequence occupies residues 1–18 (MSILPVIFLSIFFYSSFV). 3 Ig-like domains span residues 24 to 115 (PECI…LNLT), 122 to 212 (SNID…RIVK), and 221 to 322 (PSTM…KTVT). The cysteines at positions 48 and 99 are disulfide-linked. Asn80, Asn103, and Asn113 each carry an N-linked (GlcNAc...) asparagine; by host glycan. A disulfide bridge links Cys143 with Cys194. N-linked (GlcNAc...) asparagine; by host glycans are attached at residues Asn206 and Asn237. A disulfide bridge links Cys242 with Cys309.

Belongs to the interleukin-1 receptor family. Interacts with mouse Il1b.

The protein resides in the secreted. Its function is as follows. May reduce the host inflammatory response by interacting with inteleukin-1 beta (Il1b) and thus decreasing the association between IL1B and its cellular receptor. The chain is Interleukin-1-binding protein (OPG201) from Vaccinia virus (strain Western Reserve) (VACV).